A 126-amino-acid chain; its full sequence is FCS-Like Zinc finger 17 (126 aa).

The FLZ-type zinc-finger motif lies at 41 to 85 (CFLKTCHLCNKQLHQDKDVYMYRGDLGFCSRECRESQMLIDDRKE).

The protein belongs to the FLZ family. Interacts with KIN10 and KIN11 via its FLZ-type zinc finger domain. Forms heterodimer with FLZ2 in vitro.

The protein localises to the nucleus. Its subcellular location is the cytoplasm. Its function is as follows. May act as an adapter to facilitate the interaction of SnRK1 complex with effector proteins, conferring tissue- and stimulus-type specific differences in the SnRK1 regulation pathway. This Arabidopsis thaliana (Mouse-ear cress) protein is FCS-Like Zinc finger 17.